The primary structure comprises 521 residues: MAKITRALISLSDKTGIVEFARELAGYGVEILSTGGTAKLLRDAGLTVKDVSEHTGFPEMLDGRVKTLHPKVHGGLLGMRSNPEHVATMKEHGILPIDMVVVNLYPFEATVANPACTLEDAIENIDIGGPTMLRSAAKNNADVTVVVDPADYRTVLDEMKASGGSVAKETNFRLAVKVYQHTAAYDGAISNWLGARTGEGVATYSDTITLQFKKAQEMRYGENPHQSAAFYVERQVQEASVSTARQLQGKELSYNNIGDTDAALECVKQFSEGPACVIVKHANPCGVAIGKNLLEAYDRAYATDPESAFGGIIAFNGELDAETAKAICDRQFVEVIIAPSVSKAAVEVVAAKKNVRLLECGIWPAQPAQRLDFKRVNGGLLVQDTDLALSAELKVVSKRQPTAQEMIDLQFAWRVAKFVKSNAIVYGKDGMTIGVGAGQMSRVNSARIAAIKAEHAGLEVQGAVMASDAFFPFRDGIDNAAAVGITAVIQPGGSMRDAEVIAAADEHGMAMVFTGMRHFRH.

An MGS-like domain is found at 1 to 147 (MAKITRALIS…KNNADVTVVV (147 aa)).

Belongs to the PurH family.

It catalyses the reaction (6R)-10-formyltetrahydrofolate + 5-amino-1-(5-phospho-beta-D-ribosyl)imidazole-4-carboxamide = 5-formamido-1-(5-phospho-D-ribosyl)imidazole-4-carboxamide + (6S)-5,6,7,8-tetrahydrofolate. It carries out the reaction IMP + H2O = 5-formamido-1-(5-phospho-D-ribosyl)imidazole-4-carboxamide. It participates in purine metabolism; IMP biosynthesis via de novo pathway; 5-formamido-1-(5-phospho-D-ribosyl)imidazole-4-carboxamide from 5-amino-1-(5-phospho-D-ribosyl)imidazole-4-carboxamide (10-formyl THF route): step 1/1. It functions in the pathway purine metabolism; IMP biosynthesis via de novo pathway; IMP from 5-formamido-1-(5-phospho-D-ribosyl)imidazole-4-carboxamide: step 1/1. This is Bifunctional purine biosynthesis protein PurH from Geobacter metallireducens (strain ATCC 53774 / DSM 7210 / GS-15).